The sequence spans 671 residues: DNA ligase (671 aa).

Residues 32–36 (DAEYD), 81–82 (SL), and Glu113 each bind NAD(+). The active-site N6-AMP-lysine intermediate is the Lys115. Residues Arg136, Glu173, Lys290, and Lys314 each coordinate NAD(+). Zn(2+) contacts are provided by Cys408, Cys411, Cys426, and Cys432. Positions 593–671 (EIDSPFAGKT…EAEMLRLLGS (79 aa)) constitute a BRCT domain.

The protein belongs to the NAD-dependent DNA ligase family. LigA subfamily. Mg(2+) serves as cofactor. Requires Mn(2+) as cofactor.

It carries out the reaction NAD(+) + (deoxyribonucleotide)n-3'-hydroxyl + 5'-phospho-(deoxyribonucleotide)m = (deoxyribonucleotide)n+m + AMP + beta-nicotinamide D-nucleotide.. Its function is as follows. DNA ligase that catalyzes the formation of phosphodiester linkages between 5'-phosphoryl and 3'-hydroxyl groups in double-stranded DNA using NAD as a coenzyme and as the energy source for the reaction. It is essential for DNA replication and repair of damaged DNA. The protein is DNA ligase of Shigella sonnei (strain Ss046).